Consider the following 234-residue polypeptide: Ribonuclease HII (234 aa).

An RNase H type-2 domain is found at 30 to 221 (GPVAGVDEAG…VRNAAMGSSL (192 aa)). Residues Asp-36, Glu-37, and Asp-130 each coordinate a divalent metal cation.

It belongs to the RNase HII family. Mn(2+) is required as a cofactor. Mg(2+) serves as cofactor.

It localises to the cytoplasm. The catalysed reaction is Endonucleolytic cleavage to 5'-phosphomonoester.. Its function is as follows. Endonuclease that specifically degrades the RNA of RNA-DNA hybrids. This chain is Ribonuclease HII, found in Mycobacteroides abscessus (strain ATCC 19977 / DSM 44196 / CCUG 20993 / CIP 104536 / JCM 13569 / NCTC 13031 / TMC 1543 / L948) (Mycobacterium abscessus).